We begin with the raw amino-acid sequence, 134 residues long: U35-theraphotoxin-Cg1a (134 aa).

The first 18 residues, 1-18, serve as a signal peptide directing secretion; it reads MLVTLLETFSVVFQVANG. A propeptide spanning residues 19–56 is cleaved from the precursor; the sequence is DGNCVPRFQDDVEFCDNYILEAVTEASKMIAPRAREQK.

In terms of tissue distribution, expressed by the venom gland.

It localises to the secreted. Probable secreted venom toxin. The polypeptide is U35-theraphotoxin-Cg1a (Chilobrachys guangxiensis (Chinese earth tiger tarantula)).